The following is a 138-amino-acid chain: Sec-independent protein translocase protein TatB (138 aa).

Residues Met-1–Gly-21 form a helical membrane-spanning segment. The segment at Met-74–Asp-138 is disordered. Residues Gln-83–Ala-97 show a composition bias toward low complexity. A compositionally biased stretch (basic and acidic residues) spans Arg-98 to Asp-138.

The protein belongs to the TatB family. The Tat system comprises two distinct complexes: a TatABC complex, containing multiple copies of TatA, TatB and TatC subunits, and a separate TatA complex, containing only TatA subunits. Substrates initially bind to the TatABC complex, which probably triggers association of the separate TatA complex to form the active translocon.

The protein localises to the cell inner membrane. Part of the twin-arginine translocation (Tat) system that transports large folded proteins containing a characteristic twin-arginine motif in their signal peptide across membranes. Together with TatC, TatB is part of a receptor directly interacting with Tat signal peptides. TatB may form an oligomeric binding site that transiently accommodates folded Tat precursor proteins before their translocation. The polypeptide is Sec-independent protein translocase protein TatB (Erythrobacter litoralis (strain HTCC2594)).